The sequence spans 242 residues: Large ribosomal subunit protein uL1 (242 aa).

Belongs to the universal ribosomal protein uL1 family. Part of the 50S ribosomal subunit.

Functionally, binds directly to 23S rRNA. The L1 stalk is quite mobile in the ribosome, and is involved in E site tRNA release. Its function is as follows. Protein L1 is also a translational repressor protein, it controls the translation of the L11 operon by binding to its mRNA. This is Large ribosomal subunit protein uL1 from Wigglesworthia glossinidia brevipalpis.